Consider the following 443-residue polypeptide: ATP-dependent protease ATPase subunit HslU (443 aa).

ATP contacts are provided by residues Ile-18, Gly-60–Glu-65, Asp-256, Glu-321, and Arg-393.

This sequence belongs to the ClpX chaperone family. HslU subfamily. A double ring-shaped homohexamer of HslV is capped on each side by a ring-shaped HslU homohexamer. The assembly of the HslU/HslV complex is dependent on binding of ATP.

Its subcellular location is the cytoplasm. Functionally, ATPase subunit of a proteasome-like degradation complex; this subunit has chaperone activity. The binding of ATP and its subsequent hydrolysis by HslU are essential for unfolding of protein substrates subsequently hydrolyzed by HslV. HslU recognizes the N-terminal part of its protein substrates and unfolds these before they are guided to HslV for hydrolysis. This chain is ATP-dependent protease ATPase subunit HslU, found in Shigella dysenteriae serotype 1 (strain Sd197).